The sequence spans 396 residues: L-lactate dehydrogenase (396 aa).

Positions 1–380 (MIISAASDYR…SQDSLVQELD (380 aa)) constitute an FMN hydroxy acid dehydrogenase domain. Tyr24 contributes to the substrate binding site. Positions 106 and 127 each coordinate FMN. Tyr129 lines the substrate pocket. Thr155 contacts FMN. Residue Arg164 participates in substrate binding. Position 251 (Lys251) interacts with FMN. Catalysis depends on His275, which acts as the Proton acceptor. Arg278 contacts substrate. Residue 306–330 (DSGIRNGLDVVRMIALGADTVLLGR) coordinates FMN.

Belongs to the FMN-dependent alpha-hydroxy acid dehydrogenase family. FMN is required as a cofactor.

It localises to the cell inner membrane. The catalysed reaction is (S)-lactate + A = pyruvate + AH2. In terms of biological role, catalyzes the conversion of L-lactate to pyruvate. Is coupled to the respiratory chain. This is L-lactate dehydrogenase from Escherichia fergusonii (strain ATCC 35469 / DSM 13698 / CCUG 18766 / IAM 14443 / JCM 21226 / LMG 7866 / NBRC 102419 / NCTC 12128 / CDC 0568-73).